We begin with the raw amino-acid sequence, 525 residues long: Sterol O-acyltransferase 2 (525 aa).

Disordered regions lie at residues 1–34 (MQPK…THGT) and 77–97 (QDRP…ELHP). The Cytoplasmic segment spans residues 1 to 119 (MQPKVPQLRR…IDELMEVQHF (119 aa)). Residues 9 to 23 (RRREGLGEEQEKGAR) show a composition bias toward basic and acidic residues. Histidine 118 is a binding site for cholesterol. The chain crosses the membrane as a helical span at residues 120–141 (RTIYHMFIAGLCVLIISTLAID). At 142–161 (FIDEGRLMLEFDLLLFSFGQ) the chain is on the lumenal side. Residues 162-187 (LPLALMTWVPMFLSTLLVPYQTLWLW) form a helical membrane-spanning segment. At 188-199 (ARPRAGGAWMLG) the chain is on the cytoplasmic side. Residues 200–223 (ASLGCVLLAAHAVVLCVLPVHVSV) form a helical membrane-spanning segment. Topologically, residues 224–231 (RHELPPAS) are lumenal. The helical transmembrane segment at 232 to 255 (RCVLVFEQVRLLMKSYSFLRETVP) threads the bilayer. The Cytoplasmic portion of the chain corresponds to 256–296 (GIFCVRGGKGISPPSFSSYLYFLFCPTLIYRETYPRTPSIR). Cysteine 280 bears the Cysteine sulfenic acid (-SOH); alternate mark. Cysteine 280 participates in a covalent cross-link: Glycyl cysteine thioester (Cys-Gly) (interchain with G-Cter in ubiquitin); alternate. The helical transmembrane segment at 297–329 (WNYVAKNFAQVLGCLLYACFILGRLCVPVFANM) threads the bilayer. Topologically, residues 330-346 (SREPFSTRALLLSILHA) are lumenal. The helical transmembrane segment at 347–372 (TGPGIFMLLLIFFAFLHCWLNAFAEM) threads the bilayer. Topologically, residues 373 to 420 (LRFGDRMFYRDWWNSTSFSNYYRTWNVVVHDWLYSYVYQDGLWLLGRR) are cytoplasmic. An FYXDWWN motif motif is present at residues 380 to 386 (FYRDWWN). 6 residues coordinate an acyl-CoA: asparagine 392, arginine 395, asparagine 398, histidine 402, tyrosine 410, and serine 433. Residues 421–445 (ARGVAMLGVFLVSAVVHEYIFCFVL) traverse the membrane as a helical segment. Histidine 437 is a catalytic residue. Residues 446–451 (GFFYPV) are Lumenal-facing. A helical membrane pass occupies residues 452 to 467 (MLMLFLVFGGLLNFTM). Residues 468–473 (NDRHTG) are Cytoplasmic-facing. The helical transmembrane segment at 474-505 (PAWNILMWTFLFMGQGIQVSLYCQEWYARRHC) threads the bilayer. Residues 506–525 (PLPQTTFWGMVTPRSWSCHP) are Lumenal-facing.

The protein belongs to the membrane-bound acyltransferase family. Sterol o-acyltransferase subfamily. As to quaternary structure, may form homo- or heterodimers. Interacts with INSIG1; the interaction is direct and promotes association with AMFR/gp78. In terms of processing, polyubiquitinated by AMFR/gp78 at Cys-280, leading to its degradation when the lipid levels are low. Association with AMFR/gp78 is mediated via interaction with INSIG1. High concentration of cholesterol and fatty acid results in Cys-280 oxidation, preventing ubiquitination at the same site, resulting in protein stabilization. Oxidized at Cys-280: high concentration of cholesterol and fatty acid induce reactive oxygen species, which oxidizes Cys-280, preventing ubiquitination at the same site, and resulting in protein stabilization.

The protein localises to the endoplasmic reticulum membrane. It carries out the reaction a sterol + a long-chain fatty acyl-CoA = a long-chain 3-hydroxysterol ester + CoA. The enzyme catalyses cholesterol + an acyl-CoA = a cholesterol ester + CoA. The catalysed reaction is cholesterol + (9Z)-octadecenoyl-CoA = cholesteryl (9Z-octadecenoate) + CoA. It catalyses the reaction (5Z,8Z,11Z,14Z,17Z)-eicosapentaenoyl-CoA + cholesterol = (5Z,8Z,11Z,14Z,17Z-eicosapentaenoyl)-cholesterol + CoA. It carries out the reaction (9Z,12Z,15Z)-octadecatrienoyl-CoA + cholesterol = (9Z,12Z,15Z-octadecatrienoyl)-cholesterol + CoA. The enzyme catalyses (5Z,8Z,11Z,14Z)-eicosatetraenoyl-CoA + cholesterol = cholesteryl (5Z,8Z,11Z,14Z)-eicosatetraenoate + CoA. Its function is as follows. Catalyzes the formation of fatty acid-cholesterol esters, which are less soluble in membranes than cholesterol. Plays a role in lipoprotein assembly and dietary cholesterol absorption. Utilizes oleoyl-CoA ((9Z)-octadecenoyl-CoA) and linolenoyl-CoA ((9Z,12Z,15Z)-octadecatrienoyl-CoA) as substrates. May provide cholesteryl esters for lipoprotein secretion from hepatocytes and intestinal mucosa. In Mus musculus (Mouse), this protein is Sterol O-acyltransferase 2.